The sequence spans 205 residues: Ribosomal RNA small subunit methyltransferase G (205 aa).

S-adenosyl-L-methionine is bound by residues G70, L75, I121–E122, and R136.

This sequence belongs to the methyltransferase superfamily. RNA methyltransferase RsmG family.

It is found in the cytoplasm. The catalysed reaction is guanosine(527) in 16S rRNA + S-adenosyl-L-methionine = N(7)-methylguanosine(527) in 16S rRNA + S-adenosyl-L-homocysteine. Functionally, specifically methylates the N7 position of guanine in position 527 of 16S rRNA. The protein is Ribosomal RNA small subunit methyltransferase G of Methylococcus capsulatus (strain ATCC 33009 / NCIMB 11132 / Bath).